We begin with the raw amino-acid sequence, 396 residues long: Ribosomal RNA large subunit methyltransferase I (396 aa).

The region spanning 2–81 (SVRLVLAKGR…ESIDIAFFSR (80 aa)) is the PUA domain.

The protein belongs to the methyltransferase superfamily. RlmI family.

Its subcellular location is the cytoplasm. The enzyme catalyses cytidine(1962) in 23S rRNA + S-adenosyl-L-methionine = 5-methylcytidine(1962) in 23S rRNA + S-adenosyl-L-homocysteine + H(+). Functionally, specifically methylates the cytosine at position 1962 (m5C1962) of 23S rRNA. This is Ribosomal RNA large subunit methyltransferase I from Shigella flexneri serotype 5b (strain 8401).